A 99-amino-acid chain; its full sequence is Nucleoid-associated protein SZO_16661 (99 aa).

This sequence belongs to the YbaB/EbfC family. Homodimer.

The protein resides in the cytoplasm. Its subcellular location is the nucleoid. Functionally, binds to DNA and alters its conformation. May be involved in regulation of gene expression, nucleoid organization and DNA protection. This chain is Nucleoid-associated protein SZO_16661, found in Streptococcus equi subsp. zooepidemicus (strain H70).